Reading from the N-terminus, the 151-residue chain is SsrA-binding protein (151 aa).

The tract at residues 124–151 (GKKLHDKRESEKERDWNRQKSRLLKAHG) is disordered. The span at 129-141 (DKRESEKERDWNR) shows a compositional bias: basic and acidic residues. Residues 142–151 (QKSRLLKAHG) are compositionally biased toward basic residues.

The protein belongs to the SmpB family.

The protein resides in the cytoplasm. In terms of biological role, required for rescue of stalled ribosomes mediated by trans-translation. Binds to transfer-messenger RNA (tmRNA), required for stable association of tmRNA with ribosomes. tmRNA and SmpB together mimic tRNA shape, replacing the anticodon stem-loop with SmpB. tmRNA is encoded by the ssrA gene; the 2 termini fold to resemble tRNA(Ala) and it encodes a 'tag peptide', a short internal open reading frame. During trans-translation Ala-aminoacylated tmRNA acts like a tRNA, entering the A-site of stalled ribosomes, displacing the stalled mRNA. The ribosome then switches to translate the ORF on the tmRNA; the nascent peptide is terminated with the 'tag peptide' encoded by the tmRNA and targeted for degradation. The ribosome is freed to recommence translation, which seems to be the essential function of trans-translation. This is SsrA-binding protein from Rhizobium johnstonii (strain DSM 114642 / LMG 32736 / 3841) (Rhizobium leguminosarum bv. viciae).